We begin with the raw amino-acid sequence, 392 residues long: Chaperone protein DnaJ (392 aa).

One can recognise a J domain in the interval 2 to 67 (DYYDVLGVSK…QKRESYDRYG (66 aa)). A CR-type zinc finger spans residues 149–227 (GVEKELLVSG…CRGQGRIKDK (79 aa)). The Zn(2+) site is built by cysteine 162, cysteine 165, cysteine 179, cysteine 182, cysteine 201, cysteine 204, cysteine 215, and cysteine 218. 4 CXXCXGXG motif repeats span residues 162-169 (CETCLGSG), 179-186 (CDRCKGSG), 201-208 (CPECGGEG), and 215-222 (CSNCRGQG).

It belongs to the DnaJ family. As to quaternary structure, homodimer. The cofactor is Zn(2+).

It localises to the cytoplasm. Participates actively in the response to hyperosmotic and heat shock by preventing the aggregation of stress-denatured proteins and by disaggregating proteins, also in an autonomous, DnaK-independent fashion. Unfolded proteins bind initially to DnaJ; upon interaction with the DnaJ-bound protein, DnaK hydrolyzes its bound ATP, resulting in the formation of a stable complex. GrpE releases ADP from DnaK; ATP binding to DnaK triggers the release of the substrate protein, thus completing the reaction cycle. Several rounds of ATP-dependent interactions between DnaJ, DnaK and GrpE are required for fully efficient folding. Also involved, together with DnaK and GrpE, in the DNA replication of plasmids through activation of initiation proteins. The protein is Chaperone protein DnaJ of Chlamydia caviae (strain ATCC VR-813 / DSM 19441 / 03DC25 / GPIC) (Chlamydophila caviae).